We begin with the raw amino-acid sequence, 630 residues long: Plastin-3 (630 aa).

2 EF-hand domains span residues 12 to 47 (DELDELKEAFAKVDLNSNGFICDYELHELFKEANMP) and 52 to 87 (KVREIIQKLMLDGDRNKDGKISFDEFVYIFQEVKSS). Aspartate 25, asparagine 27, asparagine 29, glutamate 36, aspartate 65, asparagine 67, aspartate 69, lysine 71, and glutamate 76 together coordinate Ca(2+). Actin-binding stretches follow at residues 109–382 (TSEL…ALTK) and 383–627 (PENQ…GRGM). Calponin-homology (CH) domains are found at residues 123–239 (EEEK…KIGL) and 267–378 (LSPE…NKYP). A phosphoserine mark is found at serine 268, serine 293, serine 326, and serine 339. Residue threonine 391 is modified to Phosphothreonine. 2 consecutive Calponin-homology (CH) domains span residues 397 to 506 (TREE…RRYT) and 518 to 627 (KAND…GRGM).

As to quaternary structure, monomer.

It localises to the cytoplasm. Its function is as follows. Actin-bundling protein. The protein is Plastin-3 (PLS3) of Bos taurus (Bovine).